A 268-amino-acid chain; its full sequence is Phosphate import ATP-binding protein PstB 2 (268 aa).

Residues 19–263 form the ABC transporter domain; it reads YKVRNMAFFY…PKDKRTEDYI (245 aa). 51-58 is an ATP binding site; the sequence is GPSGCGKS.

This sequence belongs to the ABC transporter superfamily. Phosphate importer (TC 3.A.1.7) family. As to quaternary structure, the complex is composed of two ATP-binding proteins (PstB), two transmembrane proteins (PstC and PstA) and a solute-binding protein (PstS).

It localises to the cell inner membrane. It carries out the reaction phosphate(out) + ATP + H2O = ADP + 2 phosphate(in) + H(+). In terms of biological role, part of the ABC transporter complex PstSACB involved in phosphate import. Responsible for energy coupling to the transport system. The chain is Phosphate import ATP-binding protein PstB 2 from Gloeobacter violaceus (strain ATCC 29082 / PCC 7421).